A 529-amino-acid chain; its full sequence is All-trans-zeta-carotene desaturase (529 aa).

An FAD-binding site is contributed by 12-45; the sequence is IVVGAGPGGLSAAINLAGQGFRVTVVEKDAVPGG.

This sequence belongs to the carotenoid/retinoid oxidoreductase family. Requires FAD as cofactor.

The catalysed reaction is all-trans-zeta-carotene + 2 A = all-trans-lycopene + 2 AH2. Its pathway is carotenoid biosynthesis; lycopene biosynthesis. Functionally, dehydrogenates carotenes in the trans conformation: converts all-trans-zeta-carotene into all-trans-lycopene, one of the last dehydrogenation steps of lycopene biosynthesis. The sequence is that of All-trans-zeta-carotene desaturase (carC) from Myxococcus xanthus.